The chain runs to 312 residues: Malate dehydrogenase (312 aa).

Residues 12 to 17 (GAGFTG) and Asp-36 each bind NAD(+). Residues Arg-87 and Arg-93 each coordinate substrate. NAD(+) contacts are provided by residues Asn-100 and 123–125 (LTN). Asn-125 lines the substrate pocket. Phosphoserine is present on Ser-149. Arg-156 serves as a coordination point for substrate. The active-site Proton acceptor is His-180.

Belongs to the LDH/MDH superfamily. MDH type 3 family.

The catalysed reaction is (S)-malate + NAD(+) = oxaloacetate + NADH + H(+). In terms of biological role, catalyzes the reversible oxidation of malate to oxaloacetate. This is Malate dehydrogenase from Anoxybacillus flavithermus (strain DSM 21510 / WK1).